The chain runs to 176 residues: RNA 2',3'-cyclic phosphodiesterase (176 aa).

The Proton donor role is filled by H39. Short sequence motifs (HXTX) lie at residues 39–42 and 122–125; these read HITL and HLTV. H122 (proton acceptor) is an active-site residue.

The protein belongs to the 2H phosphoesterase superfamily. ThpR family.

It carries out the reaction a 3'-end 2',3'-cyclophospho-ribonucleotide-RNA + H2O = a 3'-end 2'-phospho-ribonucleotide-RNA + H(+). Hydrolyzes RNA 2',3'-cyclic phosphodiester to an RNA 2'-phosphomonoester. The chain is RNA 2',3'-cyclic phosphodiesterase from Archaeoglobus fulgidus (strain ATCC 49558 / DSM 4304 / JCM 9628 / NBRC 100126 / VC-16).